Reading from the N-terminus, the 228-residue chain is Adapter protein MecA (228 aa).

The protein belongs to the MecA family. As to quaternary structure, homodimer.

In terms of biological role, enables the recognition and targeting of unfolded and aggregated proteins to the ClpC protease or to other proteins involved in proteolysis. In Lacticaseibacillus paracasei (strain ATCC 334 / BCRC 17002 / CCUG 31169 / CIP 107868 / KCTC 3260 / NRRL B-441) (Lactobacillus paracasei), this protein is Adapter protein MecA.